We begin with the raw amino-acid sequence, 146 residues long: Leghemoglobin Lb120-34 (146 aa).

A Globin domain is found at 2 to 146 (GFTEKQEALV…LASAIKKAMN (145 aa)). Tyr-24 and Tyr-29 each carry nitrated tyrosine. Residue Ser-44 participates in heme b binding. Ser-44 carries the post-translational modification Phosphoserine. His-61 is an O2 binding site. Heme b-binding residues include Lys-64, His-93, and Lys-96. Tyr-134 is modified (nitrated tyrosine).

The protein belongs to the plant globin family. In terms of assembly, monomer. In terms of processing, nitrated in effective nodules and particularly in hypoxic conditions; this mechanism may play a protective role in the symbiosis by buffering toxic peroxynitrite NO(2)(-). Nitration level decrease during nodule senescence. Phosphorylation at Ser-44 disrupts the molecular environment of its porphyrin ring oxygen binding pocket, thus leading to a reduced oxygen consumption and to the delivery of oxygen O(2) to symbiosomes. In terms of tissue distribution, root nodules.

Its subcellular location is the cytoplasm. It localises to the cytosol. The protein localises to the nucleus. Its function is as follows. Leghemoglobin that reversibly binds oxygen O(2) through a pentacoordinated heme iron. In root nodules, facilitates the diffusion of oxygen to the bacteroids while preventing the bacterial nitrogenase from being inactivated by buffering dioxygen, nitric oxide and carbon monoxide, and promoting the formation of reactive oxygen species (ROS, e.g. H(2)O(2)). This role is essential for symbiotic nitrogen fixation (SNF). This chain is Leghemoglobin Lb120-34, found in Pisum sativum (Garden pea).